A 107-amino-acid polypeptide reads, in one-letter code: Iron-sulfur cluster assembly protein CyaY (107 aa).

The protein belongs to the frataxin family.

Functionally, involved in iron-sulfur (Fe-S) cluster assembly. May act as a regulator of Fe-S biogenesis. The sequence is that of Iron-sulfur cluster assembly protein CyaY from Neisseria meningitidis serogroup A / serotype 4A (strain DSM 15465 / Z2491).